The primary structure comprises 486 residues: Cardiolipin synthase A (486 aa).

2 helical membrane passes run 3–23 (TFYT…IAGV) and 38–58 (MAWL…YLSF). PLD phosphodiesterase domains lie at 219–246 (MDLR…VDPR) and 399–426 (EGGL…DMRS). Catalysis depends on residues His-224, Lys-226, Asp-231, His-404, Lys-406, and Asp-411.

This sequence belongs to the phospholipase D family. Cardiolipin synthase subfamily. ClsA sub-subfamily.

It localises to the cell inner membrane. It catalyses the reaction 2 a 1,2-diacyl-sn-glycero-3-phospho-(1'-sn-glycerol) = a cardiolipin + glycerol. Its function is as follows. Catalyzes the reversible phosphatidyl group transfer from one phosphatidylglycerol molecule to another to form cardiolipin (CL) (diphosphatidylglycerol) and glycerol. This Citrobacter koseri (strain ATCC BAA-895 / CDC 4225-83 / SGSC4696) protein is Cardiolipin synthase A.